A 428-amino-acid polypeptide reads, in one-letter code: UDP-N-acetylglucosamine 1-carboxyvinyltransferase (428 aa).

25–26 contacts phosphoenolpyruvate; it reads KN. Residue R102 coordinates UDP-N-acetyl-alpha-D-glucosamine. C126 acts as the Proton donor in catalysis. A 2-(S-cysteinyl)pyruvic acid O-phosphothioketal modification is found at C126. 2 residues coordinate UDP-N-acetyl-alpha-D-glucosamine: D316 and V338.

It belongs to the EPSP synthase family. MurA subfamily.

It localises to the cytoplasm. The enzyme catalyses phosphoenolpyruvate + UDP-N-acetyl-alpha-D-glucosamine = UDP-N-acetyl-3-O-(1-carboxyvinyl)-alpha-D-glucosamine + phosphate. Its pathway is cell wall biogenesis; peptidoglycan biosynthesis. In terms of biological role, cell wall formation. Adds enolpyruvyl to UDP-N-acetylglucosamine. This Anaplasma marginale (strain St. Maries) protein is UDP-N-acetylglucosamine 1-carboxyvinyltransferase.